A 1659-amino-acid chain; its full sequence is MRAVVLALTLALVASQSVNFAPDFAASKTYVYKYEALLLGGLPEEGLARAGVKVISKVLISAVAENTYLLKLVNPEIFEYSGVWPKDPFVPAAKLTSALAAQFSIPIKFEYAKGVVGKVLAPTAVSETVLNVHRGILNILQLNIKKTQNVYELQEAGAQGVCKTHYVIREDAKAERIHLTKSKDLNNCQQRIMKDFGLAYTEKCVECRQRGEALMGAATYNYLMKPADNGALILEATVTELHQFTPFNEMSGAAQMEAKQMLTFVEIKKDPIIVPDNNYVHRGSIRYEFATEILQMPIQLLKISNARAQAVKILNHLVTYNTAPVHEDAPLKFLQFIQLLRMASSETINAIWAEFKAKPAYRHWILDAVPSIGSSVAVRFIKEKFLAGDITIFEAAQALVAAVHMVAADLETVKLVESLAFNHKIQTHPVLRELTMLGYGTMVSKYCVEHPNCPAELVKPIHELAVQAVANSKFEELSMVLKALGNAGHPASIKPITKLLPVFGTAAAALPLRVQADAVLALRNIAKREPRMVQEVAVQLFMDKALHPELRMLACIVLFETKPPMGLVITLASILKTEKNMQVASFTYSHMMSLTRSTAPDFASVAAACNVAVKMLSNKFRRLSCHFSQAIHLDAYSNPLRIGAAASAFYINDAATLFPRTVVAKARTYFAGAAADVLEVGVRTEGIQEALLKLPPAPENADRITKMRRVIKALSDWRSLATSKPLASIYVKFFGQEIAFANIDKSIIDQALQLANSPSAHALGRNALKALLAGATFQYVKPLLAAEVRRIFPTAVGLPMELSYYTAAVAKAYVNVRATLTPALPETFHAAQLLKTNIELHAEVRPSIVMHTFAVMGVNTAFIQAAIMARAKVRTIVPAKFAAQLDIANGNFKFEAFPVSPPEHIAAAHIETFAVARNVEDVPAERITPLIPAQGVARSTQQSRDKLTSMIADSAASFAGSLSRSSEILYSDLPSNFKPIIKAIVVHLEETICVERLGVKACFEFTSESAAFIRNTLFYNMIGKHSVLISVKPSASEPAIERLEFEVQVGPKAAEKIIKVITMNEEEEAPEGKTVLLKLKKILLPDLKNGTRASSSSSSSSSSSSRSSSSRSRSRKSESSSSSSSSSSRISKRDGPDQPYNPNDRKFKKNHKDSQSTSNVISRSKSSASSFHAIYKQDKFLGNKLAPMVIILFRLVRADHKIEGYQVTAYLNKATSRLQIIMAALDENDNWKLCADGVLLSKHKVTAKIAWGAECKDYNTFITAETGLVGPSPAVRLRLSWDKLPKVPKAVWRYVRIVSEFIPGYIPYYLADLVPMQKDKNNEKQIQFTVVATSERTLDVILKTPKMTLYKLGVNLPCSLPFESMTDLSPFDDNIVNKIHYLFSEVNAVKCSMVRDTLTTFNNKKYKINMPLSCYQVLAQDCTTELKFMVLLKKDHASEQNHINVKISDIDVDLYTEDHGVIVKVNEMEISNDNLPYKDPSGSIKIDRKGKGVSLYAPSHGLQEVYFDKYSWKIKVVDWMKGQTCGLCGKADGENRQEYRTPSGRLTKSSVSFAHSWVLPSDSCRDASECLMKLESVKLEKQVIVDDRESKCYSVEPVLRCLPGCLPVRTTPITIGFHCLPVDSNLNRSEGLSSIYEKSVDLMEKAEAHVACRCSEQCM.

The first 15 residues, methionine 1–serine 15, serve as a signal peptide directing secretion. A Vitellogenin domain is found at phenylalanine 24–valine 662. Asparagine 1089 carries an N-linked (GlcNAc...) asparagine glycan. 2 stretches are compositionally biased toward low complexity: residues glycine 1090 to arginine 1111 and serine 1119 to arginine 1129. The tract at residues glycine 1090–arginine 1163 is disordered. The VWFD domain maps to valine 1389–arginine 1565. 2 disulfides stabilise this stretch: cysteine 1391/cysteine 1528 and cysteine 1414/cysteine 1564. Asparagine 1627 carries an N-linked (GlcNAc...) asparagine glycan.

Post-translationally, phosvitin, an egg yolk storage protein, is one of the most highly phosphorylated (10%) proteins in nature. As to expression, produced by the liver, secreted into the blood and then sequestered by receptor mediated endocytosis into growing oocytes, where it is generally cleaved, giving rise to the respective yolk components lipovitellin-I, phosvitin, lipovitellin-II.

In terms of biological role, precursor of the major egg-yolk proteins that are sources of nutrients during early development of oviparous organisms. This Oncorhynchus mykiss (Rainbow trout) protein is Vitellogenin (vtg1).